A 181-amino-acid polypeptide reads, in one-letter code: MHIVQPIRSLEKIQEVKQYLLNKNKRDYFLFIFGINSALRISDILPLQVKDVQNKDHLWATESKTKKKRKILILESLKQEIYEYTKDMKENEYLFKSVRTRKPISRIQAYRILREAAAACGLEEIGTHTLRKTFGYHFYQRTKDIAELQRILNHSSPSITMRYIGIDEDTTRAAYKVFGGL.

The Tyr recombinase domain maps to 3–176 (IVQPIRSLEK…DEDTTRAAYK (174 aa)). Active-site residues include arginine 40, lysine 64, histidine 128, arginine 131, and histidine 154. The O-(3'-phospho-DNA)-tyrosine intermediate role is filled by tyrosine 163.

This sequence belongs to the 'phage' integrase family.

This chain is Probable integrase/recombinase YoeC (yoeC), found in Bacillus subtilis (strain 168).